The following is a 1052-amino-acid chain: RIMS-binding protein 2 (1052 aa).

A disordered region spans residues 115–164; that stretch reads GEYIRPLPQPGDRPEPLSAKPTFLSRSGSARCRSESDMENERNSNTSKQR. The span at 146 to 156 shows a compositional bias: basic and acidic residues; sequence CRSESDMENER. The SH3 1 domain occupies 167-234; it reads GKVHLCVARY…PSNFVDFVQD (68 aa). Fibronectin type-III domains are found at residues 297–390, 393–475, and 489–590; these read VPYP…GKDV, APSH…KKEA, and PPQD…VPPT. 5 disordered regions span residues 584 to 615, 629 to 666, 697 to 716, 767 to 787, and 805 to 829; these read ELLV…DEHL, RAPG…PVST, SAGQ…PDFK, EMQL…NALK, and FPRG…YGRD. Pro residues predominate over residues 585–598; it reads LLVPPTPHPRPAPQ. The segment covering 645 to 654 has biased composition (low complexity); the sequence is PGRRSPSPSR. 2 positions are modified to phosphoserine: S704 and S712. 2 positions are modified to phosphoserine: S832 and S839. A Phosphothreonine modification is found at T841. 2 consecutive SH3 domains span residues 848–916 and 952–1019; these read LPAR…EIQA and VSTR…EVPD. Positions 1029 to 1052 are disordered; the sequence is PSHYSQDTPMRSKAKRKKSVHFTP. Basic residues predominate over residues 1040 to 1052; the sequence is SKAKRKKSVHFTP.

It belongs to the RIMBP family. As to quaternary structure, interacts with RIMS1, RIMS2, CACNA1D and CACNA1B, and potentially with other Ca(2+) channel alpha-1 isoforms.

It localises to the cell membrane. The protein resides in the synapse. Its function is as follows. Plays a role in the synaptic transmission as bifunctional linker that interacts simultaneously with RIMS1, RIMS2, CACNA1D and CACNA1B. This Homo sapiens (Human) protein is RIMS-binding protein 2 (RIMBP2).